The primary structure comprises 201 residues: Rac-like GTP-binding protein ARAC2 (201 aa).

G13–T20 contacts GTP. Residues Y35–F43 carry the Effector region motif. GTP contacts are provided by residues D60–Q64 and T118–D121. C198 is modified (cysteine methyl ester). C198 carries the S-geranylgeranyl cysteine lipid modification. A propeptide spans F199 to L201 (removed in mature form).

The protein belongs to the small GTPase superfamily. Rho family. As to expression, expressed exclusively in the root, hypocotyl and stem.

It is found in the cytoplasm. The protein resides in the membrane. Functionally, inactive GDP-bound Rho GTPases reside in the cytosol, are found in a complex with Rho GDP-dissociation inhibitors (Rho GDIs), and are released from the GDI protein in order to translocate to membranes upon activation. This Arabidopsis thaliana (Mouse-ear cress) protein is Rac-like GTP-binding protein ARAC2 (ARAC2).